Here is a 339-residue protein sequence, read N- to C-terminus: MKVYYDSDADLGLIKSKKIAILGYGSQGHAHAQNLRDSGVAEVAIALRPDSASVKKAQDAGFKVLTNAEAAKWADILMILAPDEHQAAIYAEDLKDNLRPGSAIAFAHGLNIHFGLIEPRKDIDVFMIAPKGPGHTVRSEYVRGGGVPCLVAVDQDASGNAHDIALAYASGIGGGRSGVIETTFREEVETDLFGEQAVLCGGLTALITAGFETLTEAGYAPEMAFFECMHEMKLIVDLIYEAGIANMRYSISNTAEYGDIVSGPRVINEESKKAMKAILDDIQSGRFVSKFVLDNRAGQPELKAARKRMAAHPIEQVGARLRKMMPWIASNKLVDKARN.

The KARI N-terminal Rossmann domain occupies 1 to 182; the sequence is MKVYYDSDAD…GGGRSGVIET (182 aa). Residues 24-27, arginine 48, serine 51, serine 53, and 83-86 each bind NADP(+); these read YGSQ and DEHQ. The active site involves histidine 108. Glycine 134 is an NADP(+) binding site. Positions 183 to 328 constitute a KARI C-terminal knotted domain; sequence TFREEVETDL…ARLRKMMPWI (146 aa). Mg(2+) is bound by residues aspartate 191, glutamate 195, glutamate 227, and glutamate 231. Serine 252 contacts substrate.

This sequence belongs to the ketol-acid reductoisomerase family. The cofactor is Mg(2+).

It carries out the reaction (2R)-2,3-dihydroxy-3-methylbutanoate + NADP(+) = (2S)-2-acetolactate + NADPH + H(+). The enzyme catalyses (2R,3R)-2,3-dihydroxy-3-methylpentanoate + NADP(+) = (S)-2-ethyl-2-hydroxy-3-oxobutanoate + NADPH + H(+). The protein operates within amino-acid biosynthesis; L-isoleucine biosynthesis; L-isoleucine from 2-oxobutanoate: step 2/4. It functions in the pathway amino-acid biosynthesis; L-valine biosynthesis; L-valine from pyruvate: step 2/4. Involved in the biosynthesis of branched-chain amino acids (BCAA). Catalyzes an alkyl-migration followed by a ketol-acid reduction of (S)-2-acetolactate (S2AL) to yield (R)-2,3-dihydroxy-isovalerate. In the isomerase reaction, S2AL is rearranged via a Mg-dependent methyl migration to produce 3-hydroxy-3-methyl-2-ketobutyrate (HMKB). In the reductase reaction, this 2-ketoacid undergoes a metal-dependent reduction by NADPH to yield (R)-2,3-dihydroxy-isovalerate. This Zymomonas mobilis subsp. mobilis (strain ATCC 31821 / ZM4 / CP4) protein is Ketol-acid reductoisomerase (NADP(+)).